Consider the following 301-residue polypeptide: HTH-type transcriptional regulator EstR (301 aa).

An HTH lysR-type domain is found at 5–62; sequence PSLRQLSYLVTLSETLHFTEAARRSFVTQSTLSGGIMELERLLGGVLVERDRQNVRLT. The H-T-H motif DNA-binding region spans 22–41; the sequence is FTEAARRSFVTQSTLSGGIM.

Belongs to the LysR transcriptional regulatory family.

Transcriptional regulator of the esterase operon. The polypeptide is HTH-type transcriptional regulator EstR (estR) (Acinetobacter baylyi (strain ATCC 33305 / BD413 / ADP1)).